A 132-amino-acid chain; its full sequence is Small ribosomal subunit protein uS8 (132 aa).

It belongs to the universal ribosomal protein uS8 family. In terms of assembly, part of the 30S ribosomal subunit. Contacts proteins S5 and S12.

Its function is as follows. One of the primary rRNA binding proteins, it binds directly to 16S rRNA central domain where it helps coordinate assembly of the platform of the 30S subunit. This is Small ribosomal subunit protein uS8 from Allorhizobium ampelinum (strain ATCC BAA-846 / DSM 112012 / S4) (Agrobacterium vitis (strain S4)).